The primary structure comprises 541 residues: Pseudokinase FAM20A (541 aa).

The first 33 residues, 1-33 (MPGLRRDRLLTLLLLGALLSADLYFHLWPQVQR), serve as a signal peptide directing secretion. Residues 38-90 (RERPRGCPCTGRASSLARDSAAAASDPGTIVHNFSRTEPRTEPAGGSHSGSSS) form a disordered region. Residues 49 to 63 (RASSLARDSAAAASD) are compositionally biased toward low complexity. Residues N70, N145, and N287 are each glycosylated (N-linked (GlcNAc...) asparagine). Disulfide bonds link C314–C330, C319–C323, C378–C452, and C453–C512. N388 is a glycosylation site (N-linked (GlcNAc...) asparagine). N538 carries N-linked (GlcNAc...) asparagine glycosylation.

This sequence belongs to the FAM20 family. In terms of assembly, interacts with FAM20C; probably forming a heterotetramer of 2 subunits of FAM20A and 2 subunits of FAM20C. Post-translationally, N-glycosylated. In terms of tissue distribution, highly expressed in lung and liver. Intermediate levels in thymus and ovary.

The protein resides in the secreted. It localises to the golgi apparatus. It is found in the endoplasmic reticulum. Functionally, pseudokinase that acts as an allosteric activator of the Golgi serine/threonine protein kinase FAM20C and is involved in biomineralization of teeth. Forms a complex with FAM20C and increases the ability of FAM20C to phosphorylate the proteins that form the 'matrix' that guides the deposition of the enamel minerals. This chain is Pseudokinase FAM20A, found in Homo sapiens (Human).